Here is a 110-residue protein sequence, read N- to C-terminus: Small ribosomal subunit protein bS16 (110 aa).

The tract at residues 87-110 is disordered; it reads ARQNPIKAVPRKERKAQAEAAAKG.

The protein belongs to the bacterial ribosomal protein bS16 family.

This chain is Small ribosomal subunit protein bS16, found in Bradyrhizobium sp. (strain BTAi1 / ATCC BAA-1182).